The primary structure comprises 354 residues: Homeobox-leucine zipper protein HOX27 (354 aa).

The tract at residues 98 to 175 (SVAAGAPGME…DDEGASARKK (78 aa)) is disordered. The span at 148–157 (QGGGGGGGGE) shows a compositional bias: gly residues. Positions 171 to 230 (SARKKLRLSKEQSAFLEESFKEHSTLNPKQKVALAKQLNLRPRQVEVWFQNRRARTKLKQ) form a DNA-binding region, homeobox. The segment at 229–273 (KQTEVDCEYLKRCCETLTEENRRLHKELAELRALKTARPFYMHLP) is leucine-zipper. Residues 294 to 323 (STSAPAAATSPAAAPTAAARTAVASPEPHR) are disordered.

Belongs to the HD-ZIP homeobox family. Class II subfamily. As to expression, expressed in seedlings, roots, stems, leaf sheaths and blades and panicles.

The protein resides in the nucleus. Its function is as follows. Probable transcription factor. This is Homeobox-leucine zipper protein HOX27 (HOX27) from Oryza sativa subsp. indica (Rice).